Consider the following 132-residue polypeptide: CLAVATA3/ESR (CLE)-related protein 2-B (132 aa).

Residues 1-26 (MASRMGMVAILSLFVCALVASTSVNA) form the signal peptide. Positions 68–132 (NRASKQLDRE…IGPPPFLDRY (65 aa)) are disordered. Pro82 and Pro85 each carry hydroxyproline. Pro85 carries an O-linked (Ara...) hydroxyproline glycan.

It belongs to the CLV3/ESR signal peptide family. In terms of processing, the O-glycosylation (arabinosylation) of the hydroxyproline Pro-85 enhances binding affinity of the ESR2Bp peptide for its receptor. In terms of tissue distribution, seed endosperm.

Its subcellular location is the secreted. It is found in the extracellular space. Extracellular signal peptide that regulates cell fate. In Zea mays (Maize), this protein is CLAVATA3/ESR (CLE)-related protein 2-B.